We begin with the raw amino-acid sequence, 259 residues long: Gasdermin bGSDM (259 aa).

Cysteine 3 carries the S-palmitoyl cysteine lipid modification. The next 4 membrane-spanning stretches (beta stranded) occupy residues 70 to 86 (FQFRASSILQVGVAASV), 98 to 116 (SGSFSSAFSSSNADTIQLS), 162 to 179 (GIRISVADKSKKQVDLSA), and 187 to 203 (AKAKMELKREDTGSYAF). The segment at 244–259 (PFAFIGDDAFVDLPES) is C-terminal region.

The protein belongs to the bacterial gasdermin family. As to quaternary structure, monomer in solution. In terms of assembly, forms large, homooligomeric ring-shaped pores when inserted in membranes. In terms of processing, palmitoylation helps stabilize the inactive state; may self palmitoylate. Palmitoylation plays a significant role in pore formation.

The protein resides in the cytoplasm. It localises to the cell inner membrane. With respect to regulation, the full-length protein before cleavage is inactive: intramolecular interactions between the N-terminal domain and the C-terminal region as well as the lipid modification, mediate autoinhibition. The pyroptosis-like-inducing activity is carried by the released N-terminal domain (Gasdermin bGSDM, N-terminus). Precursor of a pore-forming protein involved in defense against bacteriophages. Expression of bGSDM and the neighboring protease gene (Ga0098714_109514) is toxic in E.coli on solid medium. Cleavage of this precursor by its dedicated protease releases the active moiety (gasdermin bGSDM, N-terminus) which inserts into membranes, forming pores and triggering cell death. In terms of biological role, pore-forming protein that causes membrane permeabilization via a pyroptosis-like activity. Makes ring-like pores when released. The chain is Gasdermin bGSDM from Bradyrhizobium tropiciagri.